A 72-amino-acid chain; its full sequence is Cell division protein ZapB (72 aa).

Residues 5-71 (ILDQLEEKIK…LRSLLGQIDN (67 aa)) are a coiled coil.

It belongs to the ZapB family. In terms of assembly, homodimer. The ends of the coiled-coil dimer bind to each other, forming polymers. Interacts with FtsZ.

The protein resides in the cytoplasm. Functionally, non-essential, abundant cell division factor that is required for proper Z-ring formation. It is recruited early to the divisome by direct interaction with FtsZ, stimulating Z-ring assembly and thereby promoting cell division earlier in the cell cycle. Its recruitment to the Z-ring requires functional FtsA or ZipA. The polypeptide is Cell division protein ZapB (Actinobacillus pleuropneumoniae serotype 5b (strain L20)).